Reading from the N-terminus, the 502-residue chain is UPF0371 protein CTC_00401 (502 aa).

The protein belongs to the UPF0371 family.

This is UPF0371 protein CTC_00401 from Clostridium tetani (strain Massachusetts / E88).